The primary structure comprises 430 residues: Cytochrome c biogenesis protein CcsB (430 aa).

The next 3 membrane-spanning stretches (helical) occupy residues 14-34 (LRLA…GTIL), 72-92 (SVWF…CSWR), and 162-182 (VGPL…AWGA).

The protein belongs to the Ccs1/CcsB family. As to quaternary structure, may interact with CcsA.

The protein localises to the cellular thylakoid membrane. In terms of biological role, required during biogenesis of c-type cytochromes (cytochrome c6 and cytochrome f) at the step of heme attachment. This chain is Cytochrome c biogenesis protein CcsB, found in Synechococcus sp. (strain WH7803).